Here is a 295-residue protein sequence, read N- to C-terminus: Bifunctional protein FolD (295 aa).

Residues 177–179 and S202 contribute to the NADP(+) site; that span reads GRS.

Belongs to the tetrahydrofolate dehydrogenase/cyclohydrolase family. In terms of assembly, homodimer.

It carries out the reaction (6R)-5,10-methylene-5,6,7,8-tetrahydrofolate + NADP(+) = (6R)-5,10-methenyltetrahydrofolate + NADPH. It catalyses the reaction (6R)-5,10-methenyltetrahydrofolate + H2O = (6R)-10-formyltetrahydrofolate + H(+). Its pathway is one-carbon metabolism; tetrahydrofolate interconversion. In terms of biological role, catalyzes the oxidation of 5,10-methylenetetrahydrofolate to 5,10-methenyltetrahydrofolate and then the hydrolysis of 5,10-methenyltetrahydrofolate to 10-formyltetrahydrofolate. In Psychrobacter arcticus (strain DSM 17307 / VKM B-2377 / 273-4), this protein is Bifunctional protein FolD.